Here is a 125-residue protein sequence, read N- to C-terminus: Small ribosomal subunit protein uS13 (125 aa).

Positions 95–125 (GLPLRGQRTKTNARTRKGKRKTVANKKIASK) are disordered.

The protein belongs to the universal ribosomal protein uS13 family. Part of the 30S ribosomal subunit. Forms a loose heterodimer with protein S19. Forms two bridges to the 50S subunit in the 70S ribosome.

Located at the top of the head of the 30S subunit, it contacts several helices of the 16S rRNA. In the 70S ribosome it contacts the 23S rRNA (bridge B1a) and protein L5 of the 50S subunit (bridge B1b), connecting the 2 subunits; these bridges are implicated in subunit movement. Contacts the tRNAs in the A and P-sites. This Borreliella burgdorferi (strain ATCC 35210 / DSM 4680 / CIP 102532 / B31) (Borrelia burgdorferi) protein is Small ribosomal subunit protein uS13.